Reading from the N-terminus, the 324-residue chain is Delta-aminolevulinic acid dehydratase (324 aa).

Residues Cys-120, Cys-122, and Cys-130 each coordinate Zn(2+). Catalysis depends on Lys-195, which acts as the Schiff-base intermediate with substrate. The 5-aminolevulinate site is built by Arg-205 and Arg-216. Mg(2+) is bound at residue Glu-232. Lys-247 (schiff-base intermediate with substrate) is an active-site residue. Residues Ser-273 and Tyr-312 each coordinate 5-aminolevulinate.

This sequence belongs to the ALAD family. Homooctamer. Zn(2+) serves as cofactor.

The enzyme catalyses 2 5-aminolevulinate = porphobilinogen + 2 H2O + H(+). It functions in the pathway porphyrin-containing compound metabolism; protoporphyrin-IX biosynthesis; coproporphyrinogen-III from 5-aminolevulinate: step 1/4. With respect to regulation, allosteric enzyme. Stimulated by magnesium ions. Functionally, catalyzes an early step in the biosynthesis of tetrapyrroles. Binds two molecules of 5-aminolevulinate per subunit, each at a distinct site, and catalyzes their condensation to form porphobilinogen. This Escherichia coli (strain K12) protein is Delta-aminolevulinic acid dehydratase (hemB).